The primary structure comprises 178 residues: Transcription factor E (178 aa).

In terms of domain architecture, HTH TFE/IIEalpha-type spans 3-86 (AHEALAEIAG…YWRITDEPIQ (84 aa)).

It belongs to the TFE family. As to quaternary structure, monomer. Interaction with RNA polymerase subunits RpoF and RpoE is necessary for Tfe stimulatory transcription activity. Able to interact with Tbp and RNA polymerase in the absence of DNA promoter. Interacts both with the preinitiation and elongation complexes.

In terms of biological role, transcription factor that plays a role in the activation of archaeal genes transcribed by RNA polymerase. Facilitates transcription initiation by enhancing TATA-box recognition by TATA-box-binding protein (Tbp), and transcription factor B (Tfb) and RNA polymerase recruitment. Not absolutely required for transcription in vitro, but particularly important in cases where Tbp or Tfb function is not optimal. It dynamically alters the nucleic acid-binding properties of RNA polymerases by stabilizing the initiation complex and destabilizing elongation complexes. Seems to translocate with the RNA polymerase following initiation and acts by binding to the non template strand of the transcription bubble in elongation complexes. This chain is Transcription factor E, found in Thermofilum pendens (strain DSM 2475 / Hrk 5).